The chain runs to 620 residues: Proline--tRNA ligase (620 aa).

It belongs to the class-II aminoacyl-tRNA synthetase family. ProS type 1 subfamily. As to quaternary structure, homodimer.

The protein localises to the cytoplasm. The catalysed reaction is tRNA(Pro) + L-proline + ATP = L-prolyl-tRNA(Pro) + AMP + diphosphate. Its function is as follows. Catalyzes the attachment of proline to tRNA(Pro) in a two-step reaction: proline is first activated by ATP to form Pro-AMP and then transferred to the acceptor end of tRNA(Pro). As ProRS can inadvertently accommodate and process non-cognate amino acids such as alanine and cysteine, to avoid such errors it has two additional distinct editing activities against alanine. One activity is designated as 'pretransfer' editing and involves the tRNA(Pro)-independent hydrolysis of activated Ala-AMP. The other activity is designated 'posttransfer' editing and involves deacylation of mischarged Ala-tRNA(Pro). The misacylated Cys-tRNA(Pro) is not edited by ProRS. In Streptococcus thermophilus (strain ATCC BAA-491 / LMD-9), this protein is Proline--tRNA ligase.